Reading from the N-terminus, the 211-residue chain is MIGRLRGMLVEKNSPEILIECAGVGYEVTMPMTSIYALPELEQQATIYTHFVVREDAQLLYGFANKVERKLFRLLIKVNGVGPKLALAILSNMSADQFVSCVRHDDISAIVKIPGVGKKTAERLLIEMRDRLKDWQAQQIHLVSDDGVIPEQLSAELSQETTFVNDNKGDAINALLSLGYKQVQADKAVKSVYNRGMSSENIIRDALKSMI.

The segment at 1–64 (MIGRLRGMLV…EDAQLLYGFA (64 aa)) is domain I. A domain II region spans residues 65–143 (NKVERKLFRL…DWQAQQIHLV (79 aa)). The segment at 144-162 (SDDGVIPEQLSAELSQETT) is flexible linker. The domain III stretch occupies residues 163-211 (FVNDNKGDAINALLSLGYKQVQADKAVKSVYNRGMSSENIIRDALKSMI).

This sequence belongs to the RuvA family. Homotetramer. Forms an RuvA(8)-RuvB(12)-Holliday junction (HJ) complex. HJ DNA is sandwiched between 2 RuvA tetramers; dsDNA enters through RuvA and exits via RuvB. An RuvB hexamer assembles on each DNA strand where it exits the tetramer. Each RuvB hexamer is contacted by two RuvA subunits (via domain III) on 2 adjacent RuvB subunits; this complex drives branch migration. In the full resolvosome a probable DNA-RuvA(4)-RuvB(12)-RuvC(2) complex forms which resolves the HJ.

The protein resides in the cytoplasm. Its function is as follows. The RuvA-RuvB-RuvC complex processes Holliday junction (HJ) DNA during genetic recombination and DNA repair, while the RuvA-RuvB complex plays an important role in the rescue of blocked DNA replication forks via replication fork reversal (RFR). RuvA specifically binds to HJ cruciform DNA, conferring on it an open structure. The RuvB hexamer acts as an ATP-dependent pump, pulling dsDNA into and through the RuvAB complex. HJ branch migration allows RuvC to scan DNA until it finds its consensus sequence, where it cleaves and resolves the cruciform DNA. In Colwellia psychrerythraea (strain 34H / ATCC BAA-681) (Vibrio psychroerythus), this protein is Holliday junction branch migration complex subunit RuvA.